A 263-amino-acid chain; its full sequence is Undecaprenyl-diphosphatase (263 aa).

6 consecutive transmembrane segments (helical) span residues 40-60, 87-107, 109-129, 186-206, 219-239, and 243-263; these read PGVLFDVLLHAGTMAAVLVYF, LLIIATVPTAIIGLSFKDFFV, AFHNLPLISLMLVVTGGLLFF, FSFLMALPAVFGATLVSLLEW, AGAVMAFLSGLASIHLLMGVV, and RLYAFAVYCWLMGGMFFAISS.

This sequence belongs to the UppP family.

It localises to the cell inner membrane. The enzyme catalyses di-trans,octa-cis-undecaprenyl diphosphate + H2O = di-trans,octa-cis-undecaprenyl phosphate + phosphate + H(+). Its function is as follows. Catalyzes the dephosphorylation of undecaprenyl diphosphate (UPP). Confers resistance to bacitracin. The protein is Undecaprenyl-diphosphatase of Syntrophotalea carbinolica (strain DSM 2380 / NBRC 103641 / GraBd1) (Pelobacter carbinolicus).